A 92-amino-acid chain; its full sequence is Cell wall protein CWP2 (92 aa).

The N-terminal stretch at 1–20 (MQFSTVASVAFVALANFVAA) is a signal peptide. One copy of the PIR1/2/3 repeat lies at 24–37 (AAISQITDGQIQAT). The tract at residues 41–60 (TTEATTTAAPSSTVETVSPS) is disordered. A lipid anchor (GPI-anchor amidated asparagine) is attached at Asn-71. Positions 72 to 92 (GAAKAAVGMGAGALAAAAMLL) are cleaved as a propeptide — removed in mature form.

This sequence belongs to the SRP1/TIP1 family. Extensively O-glycosylated. Post-translationally, the GPI-anchor is attached to the protein in the endoplasmic reticulum and serves to target the protein to the cell surface. There, the glucosamine-inositol phospholipid moiety is cleaved off and the GPI-modified mannoprotein is covalently attached via its lipidless GPI glycan remnant to the 1,6-beta-glucan of the outer cell wall layer. In terms of processing, covalently linked to beta-1,3-glucan of the inner cell wall layer via an alkali-sensitive ester linkage between the gamma-carboxyl group of glutamic acids, arising from a specific glutamine within the PIR1/2/3 repeat, and hydroxyl groups of glucoses of beta-1,3-glucan chains.

The protein resides in the secreted. Its subcellular location is the cell wall. It localises to the membrane. Its function is as follows. Component of the cell wall. The protein is Cell wall protein CWP2 (CWP2) of Saccharomyces cerevisiae (strain ATCC 204508 / S288c) (Baker's yeast).